The primary structure comprises 325 residues: Glutarate 2-hydroxylase (325 aa).

Positions 160, 162, and 292 each coordinate Fe cation.

It belongs to the glutarate hydroxylase family. In terms of assembly, homotetramer. It depends on Fe(2+) as a cofactor.

The catalysed reaction is glutarate + 2-oxoglutarate + O2 = (S)-2-hydroxyglutarate + succinate + CO2. It participates in amino-acid degradation. Its function is as follows. Acts as an alpha-ketoglutarate-dependent dioxygenase catalyzing hydroxylation of glutarate (GA) to L-2-hydroxyglutarate (L2HG). Functions in a L-lysine degradation pathway that proceeds via cadaverine, glutarate and L-2-hydroxyglutarate. The chain is Glutarate 2-hydroxylase from Shigella boydii serotype 18 (strain CDC 3083-94 / BS512).